The primary structure comprises 433 residues: Glutamate-1-semialdehyde 2,1-aminomutase (433 aa).

Lysine 269 carries the post-translational modification N6-(pyridoxal phosphate)lysine.

It belongs to the class-III pyridoxal-phosphate-dependent aminotransferase family. HemL subfamily. Homodimer. The cofactor is pyridoxal 5'-phosphate.

The protein localises to the cytoplasm. The catalysed reaction is (S)-4-amino-5-oxopentanoate = 5-aminolevulinate. It participates in porphyrin-containing compound metabolism; protoporphyrin-IX biosynthesis; 5-aminolevulinate from L-glutamyl-tRNA(Glu): step 2/2. The protein is Glutamate-1-semialdehyde 2,1-aminomutase of Renibacterium salmoninarum (strain ATCC 33209 / DSM 20767 / JCM 11484 / NBRC 15589 / NCIMB 2235).